A 220-amino-acid chain; its full sequence is NAD(P)H-hydrate epimerase (220 aa).

A YjeF N-terminal domain is found at 6–203 (ARHLTTLATG…SFDLPEALFH (198 aa)). Residue 53-57 (HNGGV) participates in (6S)-NADPHX binding. Positions 54 and 116 each coordinate K(+). (6S)-NADPHX is bound by residues 120-126 (GMRLEGP) and aspartate 149. Residue threonine 152 coordinates K(+).

The protein belongs to the NnrE/AIBP family. The cofactor is K(+).

It catalyses the reaction (6R)-NADHX = (6S)-NADHX. The enzyme catalyses (6R)-NADPHX = (6S)-NADPHX. Functionally, catalyzes the epimerization of the S- and R-forms of NAD(P)HX, a damaged form of NAD(P)H that is a result of enzymatic or heat-dependent hydration. This is a prerequisite for the S-specific NAD(P)H-hydrate dehydratase to allow the repair of both epimers of NAD(P)HX. The protein is NAD(P)H-hydrate epimerase of Truepera radiovictrix (strain DSM 17093 / CIP 108686 / LMG 22925 / RQ-24).